Here is a 78-residue protein sequence, read N- to C-terminus: MKTLLLTFLVVTIVCLDLGYTLICHQLHGLQTCEPAQKFCQKRTTMFSPNHPVLLMGCTYNCPTERYSVCCSTDKCNK.

The first 21 residues, 1 to 21 (MKTLLLTFLVVTIVCLDLGYT), serve as a signal peptide directing secretion. 4 disulfides stabilise this stretch: Cys-24/Cys-40, Cys-33/Cys-58, Cys-62/Cys-70, and Cys-71/Cys-76.

Belongs to the three-finger toxin family. Short-chain subfamily. In terms of tissue distribution, expressed by the venom gland.

The protein resides in the secreted. Functionally, this three-finger toxin binds and inhibits the nicotinic acetylcholine receptor (nAChR). This Ophiophagus hannah (King cobra) protein is Short neurotoxin SNTX6.